Reading from the N-terminus, the 175-residue chain is Gamma-crystallin B (175 aa).

Beta/gamma crystallin 'Greek key' domains follow at residues 2–40 (GKITFYEDRAFQGRSYECTTDCPNLQPYFSRCNSIRVES) and 41–83 (GCWM…HLIP). The connecting peptide stretch occupies residues 84–88 (PHSGT). 2 consecutive Beta/gamma crystallin 'Greek key' domains span residues 89 to 129 (YRMK…NVLE) and 130 to 172 (GSWI…RRVM).

Belongs to the beta/gamma-crystallin family. Monomer.

In terms of biological role, crystallins are the dominant structural components of the vertebrate eye lens. The sequence is that of Gamma-crystallin B (CRYGB) from Macaca mulatta (Rhesus macaque).